We begin with the raw amino-acid sequence, 353 residues long: 2-Hydroxyacid oxidase 2 (353 aa).

One can recognise an FMN hydroxy acid dehydrogenase domain in the interval 2-353 (PLVCLADFKA…SPDLIQFSRL (352 aa)). Residues 77–79 (PTA), S106, and Q128 each bind FMN. Y130 serves as a coordination point for a 2-oxocarboxylate. Phosphoserine is present on S133. FMN is bound at residue T156. R165 contributes to the a 2-oxocarboxylate binding site. K224 provides a ligand contact to FMN. The active-site Proton acceptor is the H248. Residue R251 coordinates a 2-oxocarboxylate. Residues 279 to 283 (DGGVR) and 302 to 303 (GR) contribute to the FMN site. The Microbody targeting signal motif lies at 351–353 (SRL).

The protein belongs to the FMN-dependent alpha-hydroxy acid dehydrogenase family. As to quaternary structure, homotetramer. Could also form homooctamer. FMN serves as cofactor. Expressed in kidney.

Its subcellular location is the peroxisome. The catalysed reaction is a (2S)-2-hydroxycarboxylate + O2 = a 2-oxocarboxylate + H2O2. The enzyme catalyses 2-hydroxyoctanoate + O2 = 2-oxooctanoate + H2O2. It catalyses the reaction 2-hydroxyhexadecanoate + O2 = 2-oxohexadecanoate + H2O2. It carries out the reaction 2-hydroxyhexanoate + O2 = 2-oxohexanoate + H2O2. The catalysed reaction is mandelate + O2 = phenylglyoxylate + H2O2. With respect to regulation, is inhibited in vitro by CCPST (4-carboxy-5-(4-chlorophenyl)sulfanyl-1,2,3-thiadiazole). Oxidase that catalyzes the oxidation of medium and long chain hydroxyacids such as 2-hydroxyhexadecanoate, 2-hydroxyoctanoate, 2-hydroxyhexanoate and 2-hydroxybutanoate, to the correspondong 2-oxoacids. Its role in the oxidation of 2-hydroxy fatty acids may contribute to the general pathway of fatty acid alpha-oxidation. Can also use mandelate as substrate. Active in vitro with the artificial electron acceptor 2,6-dichlorophenolindophenol (DCIP), but O2 is believed to be the physiological electron acceptor, leading to the production of H2O2. The sequence is that of 2-Hydroxyacid oxidase 2 (Hao2) from Rattus norvegicus (Rat).